The sequence spans 261 residues: 3-methyl-2-oxobutanoate hydroxymethyltransferase (261 aa).

Residues D42 and D81 each contribute to the Mg(2+) site. 3-methyl-2-oxobutanoate-binding positions include 42-43, D81, and K110; that span reads DS. E112 is a binding site for Mg(2+). Catalysis depends on E179, which acts as the Proton acceptor.

Belongs to the PanB family. Homodecamer; pentamer of dimers. Mg(2+) is required as a cofactor.

It is found in the cytoplasm. The enzyme catalyses 3-methyl-2-oxobutanoate + (6R)-5,10-methylene-5,6,7,8-tetrahydrofolate + H2O = 2-dehydropantoate + (6S)-5,6,7,8-tetrahydrofolate. The protein operates within cofactor biosynthesis; (R)-pantothenate biosynthesis; (R)-pantoate from 3-methyl-2-oxobutanoate: step 1/2. Functionally, catalyzes the reversible reaction in which hydroxymethyl group from 5,10-methylenetetrahydrofolate is transferred onto alpha-ketoisovalerate to form ketopantoate. The chain is 3-methyl-2-oxobutanoate hydroxymethyltransferase from Thermus thermophilus (strain ATCC BAA-163 / DSM 7039 / HB27).